A 77-amino-acid polypeptide reads, in one-letter code: MATRSVLLALVVLNLLFYVPPGRSGPNVYIQKIFASCWRLQGTCRPKCLKNEQYRILCDTIHLCCVNPKYLPILTGK.

A signal peptide spans 1 to 24 (MATRSVLLALVVLNLLFYVPPGRS). Cystine bridges form between C37–C64, C44–C58, and C48–C65.

The protein belongs to the beta-defensin family.

The protein localises to the secreted. Its function is as follows. Has antibacterial activity. This is Beta-defensin 135 (DEFB135) from Homo sapiens (Human).